Consider the following 99-residue polypeptide: Large ribosomal subunit protein uL23cz/uL23cy (99 aa).

The disordered stretch occupies residues 1 to 37 (MGGVENPVSTDKAIRLPERKQYSSNAEPNPSKTEVKR). The span at 12–21 (KAIRLPERKQ) shows a compositional bias: basic and acidic residues. A compositionally biased stretch (polar residues) spans 22–32 (YSSNAEPNPSK).

It belongs to the universal ribosomal protein uL23 family. Part of the 50S ribosomal subunit.

It is found in the plastid. The protein localises to the chloroplast. Its function is as follows. Binds to 23S rRNA. This Selaginella uncinata (Blue spike-moss) protein is Large ribosomal subunit protein uL23cz/uL23cy (rpl23-A).